Consider the following 228-residue polypeptide: uncharacterized protein (228 aa).

Positions Met-1 to Gly-15 are cleaved as a signal peptide. The N-palmitoyl cysteine moiety is linked to residue Cys-16. Cys-16 carries the S-diacylglycerol cysteine lipid modification.

The protein to P.multocida PM0015.

The protein resides in the cell membrane. This is an uncharacterized protein from Pasteurella multocida (strain Pm70).